A 231-amino-acid chain; its full sequence is DNA mismatch repair protein MutH (231 aa).

This sequence belongs to the MutH family.

The protein localises to the cytoplasm. In terms of biological role, sequence-specific endonuclease that cleaves unmethylated GATC sequences. It is involved in DNA mismatch repair. The chain is DNA mismatch repair protein MutH from Klebsiella pneumoniae (strain 342).